A 295-amino-acid polypeptide reads, in one-letter code: Small ribosomal subunit protein uS2 (295 aa).

A disordered region spans residues 242-295 (APVEPTLARELAPEAPAPEAPAEEAPAAEAAPAAEAAPAAEAAPAEASSEEQAG). The segment covering 264-288 (EEAPAAEAAPAAEAAPAAEAAPAEA) has biased composition (low complexity).

Belongs to the universal ribosomal protein uS2 family.

In Phenylobacterium zucineum (strain HLK1), this protein is Small ribosomal subunit protein uS2.